Reading from the N-terminus, the 244-residue chain is Pyridoxine 5'-phosphate synthase (244 aa).

Asn7 is a 3-amino-2-oxopropyl phosphate binding site. Asp9–His10 lines the 1-deoxy-D-xylulose 5-phosphate pocket. A 3-amino-2-oxopropyl phosphate-binding site is contributed by Arg18. His43 acts as the Proton acceptor in catalysis. Positions 45 and 50 each coordinate 1-deoxy-D-xylulose 5-phosphate. The active-site Proton acceptor is the Glu70. Position 100 (Thr100) interacts with 1-deoxy-D-xylulose 5-phosphate. Catalysis depends on His191, which acts as the Proton donor. 3-amino-2-oxopropyl phosphate is bound by residues Gly192 and Gly213–His214.

Belongs to the PNP synthase family. Homooctamer; tetramer of dimers.

The protein localises to the cytoplasm. The catalysed reaction is 3-amino-2-oxopropyl phosphate + 1-deoxy-D-xylulose 5-phosphate = pyridoxine 5'-phosphate + phosphate + 2 H2O + H(+). The protein operates within cofactor biosynthesis; pyridoxine 5'-phosphate biosynthesis; pyridoxine 5'-phosphate from D-erythrose 4-phosphate: step 5/5. Functionally, catalyzes the complicated ring closure reaction between the two acyclic compounds 1-deoxy-D-xylulose-5-phosphate (DXP) and 3-amino-2-oxopropyl phosphate (1-amino-acetone-3-phosphate or AAP) to form pyridoxine 5'-phosphate (PNP) and inorganic phosphate. The protein is Pyridoxine 5'-phosphate synthase of Laribacter hongkongensis (strain HLHK9).